The chain runs to 776 residues: Protein translocase subunit SecA 2 (776 aa).

ATP-binding positions include Gln80, 98 to 102 (GEGKT), and Asp486.

It belongs to the SecA family. As to quaternary structure, monomer and homodimer. Part of the essential Sec protein translocation apparatus which comprises SecA, SecYEG and auxiliary proteins SecDF. Other proteins may also be involved.

The protein localises to the cell membrane. The protein resides in the cytoplasm. The catalysed reaction is ATP + H2O + cellular proteinSide 1 = ADP + phosphate + cellular proteinSide 2.. Part of the Sec protein translocase complex. Interacts with the SecYEG preprotein conducting channel. Has a central role in coupling the hydrolysis of ATP to the transfer of proteins into and across the cell membrane, serving as an ATP-driven molecular motor driving the stepwise translocation of polypeptide chains across the membrane. The sequence is that of Protein translocase subunit SecA 2 from Listeria welshimeri serovar 6b (strain ATCC 35897 / DSM 20650 / CCUG 15529 / CIP 8149 / NCTC 11857 / SLCC 5334 / V8).